We begin with the raw amino-acid sequence, 339 residues long: DNA-directed RNA polymerase subunit alpha (339 aa).

The segment at 1–233 (MVREEVAGST…DLFLPFLHAE (233 aa)) is alpha N-terminal domain (alpha-NTD). Positions 264–339 (KKGIPLNCIF…IDLLKNKLSF (76 aa)) are alpha C-terminal domain (alpha-CTD).

The protein belongs to the RNA polymerase alpha chain family. In terms of assembly, in plastids the minimal PEP RNA polymerase catalytic core is composed of four subunits: alpha, beta, beta', and beta''. When a (nuclear-encoded) sigma factor is associated with the core the holoenzyme is formed, which can initiate transcription.

Its subcellular location is the plastid. The protein resides in the chloroplast. It carries out the reaction RNA(n) + a ribonucleoside 5'-triphosphate = RNA(n+1) + diphosphate. DNA-dependent RNA polymerase catalyzes the transcription of DNA into RNA using the four ribonucleoside triphosphates as substrates. The polypeptide is DNA-directed RNA polymerase subunit alpha (Elymus hystrix (Eastern bottlebrush grass)).